We begin with the raw amino-acid sequence, 447 residues long: Argininosuccinate synthase (447 aa).

ATP is bound by residues 17–25 and Ala-43; that span reads AFSGGLDTS. Position 99 (Tyr-99) interacts with L-citrulline. The ATP site is built by Gly-129 and Thr-131. The L-aspartate site is built by Thr-131, Asn-135, and Asp-136. Residue Asn-135 coordinates L-citrulline. Asp-136 is a binding site for ATP. Residues Arg-139 and Ser-192 each contribute to the L-citrulline site. Asp-194 contributes to the ATP binding site. The L-citrulline site is built by Thr-201, Glu-203, and Glu-280.

The protein belongs to the argininosuccinate synthase family. Type 2 subfamily. As to quaternary structure, homotetramer.

The protein resides in the cytoplasm. It carries out the reaction L-citrulline + L-aspartate + ATP = 2-(N(omega)-L-arginino)succinate + AMP + diphosphate + H(+). It functions in the pathway amino-acid biosynthesis; L-arginine biosynthesis; L-arginine from L-ornithine and carbamoyl phosphate: step 2/3. The protein is Argininosuccinate synthase of Escherichia coli O9:H4 (strain HS).